The following is a 405-amino-acid chain: Phosphoglycerate kinase (405 aa).

Substrate-binding positions include 21-23, R36, 59-62, R119, and R161; these read DFN and HLGR. ATP-binding positions include K212, G301, E332, and 361 to 364; that span reads GGDS.

The protein belongs to the phosphoglycerate kinase family. Monomer.

The protein resides in the cytoplasm. The enzyme catalyses (2R)-3-phosphoglycerate + ATP = (2R)-3-phospho-glyceroyl phosphate + ADP. Its pathway is carbohydrate degradation; glycolysis; pyruvate from D-glyceraldehyde 3-phosphate: step 2/5. The chain is Phosphoglycerate kinase from Leuconostoc citreum (strain KM20).